We begin with the raw amino-acid sequence, 115 residues long: Large ribosomal subunit protein bL19 (115 aa).

The protein belongs to the bacterial ribosomal protein bL19 family.

This protein is located at the 30S-50S ribosomal subunit interface and may play a role in the structure and function of the aminoacyl-tRNA binding site. This is Large ribosomal subunit protein bL19 from Clostridium tetani (strain Massachusetts / E88).